The following is a 591-amino-acid chain: MVATSGQTTQGYVVEAYGNLLRVRFDGHVRQGEVAYVNVNDTWLKAEVIEVVGQEVKIQVFEDTQDVCRGALVTFSGHLLEAELGPGLLQGIFDGLQNRLQVLAESSFFLKRGEYVNALCKNTLWEYTPKAVVGDVLVRGDALGFVKEGYFNHKIMVPFSCFKEVTITWVISEGSYSVDTVVAKARDAEGKEYSFTMVQKWPIKQAFIQGDKVPCHEIMDVGIRILDTQIPVLKGGTFCTPGPFGAGKTVLQHHLSKYAAVDIVILCACGERAGEVVEVLQEFPHLTDPHTGESLMHRTCIICNTSSMPVAARESSIYLGITVAEYYRQMGLHVLLLADSTSRWAQALREISGRLEEIPGEEAFPAYLASRIAAFYERGGAVRMKDGSEGSLTICGAVSPAGGNFEEPVTQATLSVVGAFCGLSKARADARRYPSIDPMISWSKYLDQVGDILENKIQGWGKAVKKANYFLREGSEIGKRMEVVGEEGIPMEDMEIYLKAELYDFCYLQQNAFDAVDCYCPFDRQIELFSLMSRIFDAKFSFDCPDNARSFFLELQSKIKTLNGQKFLSEEYKEGMEVVLRLLETKMVQTA.

242–249 (GPFGAGKT) provides a ligand contact to ATP.

Belongs to the ATPase alpha/beta chains family.

The catalysed reaction is ATP + H2O + 4 H(+)(in) = ADP + phosphate + 5 H(+)(out). Functionally, produces ATP from ADP in the presence of a proton gradient across the membrane. The V-type alpha chain is a catalytic subunit. This Chlamydia caviae (strain ATCC VR-813 / DSM 19441 / 03DC25 / GPIC) (Chlamydophila caviae) protein is V-type ATP synthase alpha chain.